The sequence spans 250 residues: Probable transcriptional regulatory protein Cpha266_0538 (250 aa).

This sequence belongs to the TACO1 family.

It is found in the cytoplasm. This is Probable transcriptional regulatory protein Cpha266_0538 from Chlorobium phaeobacteroides (strain DSM 266 / SMG 266 / 2430).